Consider the following 322-residue polypeptide: 4-hydroxythreonine-4-phosphate dehydrogenase (322 aa).

Residues His-131 and Thr-132 each coordinate substrate. A divalent metal cation is bound by residues His-161, His-206, and His-259. Lys-267, Asn-276, and Arg-285 together coordinate substrate.

Belongs to the PdxA family. As to quaternary structure, homodimer. A divalent metal cation is required as a cofactor.

The protein resides in the cytoplasm. The catalysed reaction is 4-(phosphooxy)-L-threonine + NAD(+) = 3-amino-2-oxopropyl phosphate + CO2 + NADH. It participates in cofactor biosynthesis; pyridoxine 5'-phosphate biosynthesis; pyridoxine 5'-phosphate from D-erythrose 4-phosphate: step 4/5. Catalyzes the NAD(P)-dependent oxidation of 4-(phosphooxy)-L-threonine (HTP) into 2-amino-3-oxo-4-(phosphooxy)butyric acid which spontaneously decarboxylates to form 3-amino-2-oxopropyl phosphate (AHAP). The chain is 4-hydroxythreonine-4-phosphate dehydrogenase from Sulfurihydrogenibium sp. (strain YO3AOP1).